Consider the following 96-residue polypeptide: U-reduvitoxin-Pr12a (96 aa).

Residues 1-20 (MKTALLLFFALVFIAFETEA) form the signal peptide. 3 cysteine pairs are disulfide-bonded: C21–C38, C33–C53, and C36–C47. 2 consecutive Pacifastin domains span residues 21-55 (CRPG…ICPP) and 59-94 (KLEC…CIHK). A pro-Pro-Arg motif necessary for proteolytic processing region spans residues 54-56 (PPR). 3 disulfide bridges follow: C62/C77, C72/C91, and C75/C86.

This sequence belongs to the protease inhibitor I19 family. As to expression, expressed by the venom gland.

Its subcellular location is the secreted. Functionally, inhibits trypsin activity and prophenoloxidase (PPO) activation, an enzyme essential for both clotting and insect innate immune responses. It does not inhibit activity of chymotrypsin and protease K, and has no effect on phenoloxidase (PO) activity. The chain is U-reduvitoxin-Pr12a from Platymeris rhadamanthus (Red spot assassin bug).